The primary structure comprises 218 residues: MSMTLGYWDIRGLAHAIRLLLEYTDSSYEEKKYTMGDAPDYDRSQWLNEKFKLGLDFPNLPYLIDGAHKITQSNAILCYIARKHNLCGETEEEKIRVDILENQAMDVSNQLARVCYSPDFEKLKPEYLEELPTMMQHFSQFLGKRPWFVGDKITFVDFLAYDVLDLHRIFEPNCLDAFPNLKDFISRFEGLEKISAYMKSSRFLPKPLYTRVAVWGNK.

The GST N-terminal domain occupies 2–88; the sequence is SMTLGYWDIR…YIARKHNLCG (87 aa). Residues 7-8, 46-50, 59-60, and 72-73 each bind glutathione; these read YW, WLNEK, NL, and QS. A GST C-terminal domain is found at 90-208; sequence TEEEKIRVDI…KSSRFLPKPL (119 aa). Tyr116 is a binding site for substrate.

The protein belongs to the GST superfamily. Mu family. As to quaternary structure, homodimer. Expressed in a wide variety of tissues.

The protein localises to the cytoplasm. The catalysed reaction is RX + glutathione = an S-substituted glutathione + a halide anion + H(+). It carries out the reaction 1-chloro-2,4-dinitrobenzene + glutathione = 2,4-dinitrophenyl-S-glutathione + chloride + H(+). It catalyses the reaction (13S,14S)-epoxy-(4Z,7Z,9E,11E,16Z,19Z)-docosahexaenoate + glutathione = (13R)-S-glutathionyl-(14S)-hydroxy-(4Z,7Z,9E,11E,16Z,19Z)-docosahexaenoate. The enzyme catalyses leukotriene C4 = leukotriene A4 + glutathione. Its function is as follows. Conjugation of reduced glutathione to a wide number of exogenous and endogenous hydrophobic electrophiles. Catalyzes the conjugation of leukotriene A4 with reduced glutathione (GSH) to form leukotriene C4. Can also catalyze the transfer of a glutathionyl group from glutathione (GSH) to 13(S),14(S)-epoxy-docosahexaenoic acid to form maresin conjugate in tissue regeneration 1 (MCTR1), a bioactive lipid mediator that possess potent anti-inflammatory and proresolving actions. This Homo sapiens (Human) protein is Glutathione S-transferase Mu 4 (GSTM4).